The sequence spans 1249 residues: Apoptotic protease-activating factor 1 (1249 aa).

Residues 1-90 (MDAKARNCLL…KDLAGLLHSG (90 aa)) form the CARD domain. An NB-ARC domain is found at 106–415 (NTSFVRTVLC…LETEEVEDIL (310 aa)). ATP contacts are provided by residues 154-161 (GMAGCGKS) and arginine 265. A WD 1-1 repeat occupies 613 to 652 (PHTDAVYHACFSQDGQRIASCGADKTLQVFKAETGEKLLD). Residues 655-694 (AHEDEVLCCAFSSDDSYIATCSVDKKVKIWDSGTGKLVHT) form a WD 1-2 repeat. Residues 697 to 738 (EHSEQVNCCHFTNKSNHLLLATGSNDSFLKLWDLNQKECRNT) form a WD 1-3 repeat. Residues 741-780 (GHTNSVTHCRFSPDDELLASCSADGTLKLWDVRSANEKKS) form a WD 1-4 repeat. Residues 796-837 (DVEVIVKCCSWSADGDRIIVAAKNKVLLLDIHTSGLLTEIHT) form a WD 1-5 repeat. The WD 1-6 repeat unit spans residues 838–877 (GHHSTIQYCDFSPYDHLAVIALSQYCVELWNIDSRVKVAD). A WD 1-7 repeat occupies 880–910 (GHLSWVHGVMFSPDGSSFLTASDDQTIRVWE). The interval 910–921 (ETRKVCKNSAIV) is interpropeller linker. Residues 922 to 958 (LKQEIDVVFQENEMMVLAVDNIRGLQLIAGKTGQIDY) form a WD 2-1 repeat. The WD 2-2 repeat unit spans residues 959–998 (LPEAQVSCCCLSPHLEYVAFGDEEGAIKIIELPNNRVFSS). A WD 2-3 repeat occupies 1001–1040 (GHKKAVRHIQFTADGKTLISSSEDSVIQVWNWQTEEYVFL). Residues 1042–1080 (AHQETVKDFRLLRDSRLLSWSFDGTVKVWNVITGRIERD) form a WD 2-4 repeat. The WD 2-5 repeat unit spans residues 1083 to 1122 (CHQGTVLSCAISSDATKFSSTSADKTAKIWSFELPSPLHE). Residues 1125–1164 (GHNSCVRCSAFSLDGILLATGDDNGEIRIWNVSDGQLLHL) form a WD 2-6 repeat. Residues 1176 to 1213 (THGGWVTDVCFSPDRKMLVSAGGYLKWWNVVTGESSQT) form a WD 2-7 repeat. One copy of the WD 2-8 repeat lies at 1214 to 1249 (FYTNGTNLKKIHVSPDFRTYVTVDNLGILYILQVLE).

As to quaternary structure, monomer. Oligomerizes to a heptameric ring, known as the apoptosome, upon binding of cytochrome c and dATP. Oligomeric Apaf-1 and pro-caspase-9 bind to each other via their respective NH2-terminal CARD domains. Interacts with UACA. Interacts with APIP. Interacts (via CARD and NACHT domains) with NAIP/BIRC1 (via NACHT domain). Interacts with CIAO2A.

It localises to the cytoplasm. Its function is as follows. Regulates programmed cell death; necessary for normal brain development. Participates with pro-caspase-9 (Apaf-3) in the cytochrome c-dependent activation of caspase-3, leading to apoptosis. This activation requires ATP. This chain is Apoptotic protease-activating factor 1 (Apaf1), found in Rattus norvegicus (Rat).